The following is a 603-amino-acid chain: 65-kDa microtubule-associated protein 7 (603 aa).

Coiled-coil stretches lie at residues 48–79, 131–186, and 468–502; these read KECL…EAEI, DIKA…EKSD, and RLVS…LLIK. The interval 501–559 is disordered; the sequence is IKRRESIYGSKPSPRRSNSVRKTNGYNGDASVPPTPRRNSAGATNNDIMTTPRSYSSHR. S513 bears the Phosphoserine mark. 2 stretches are compositionally biased toward polar residues: residues 515–526 and 537–559; these read RRSNSVRKTNGY and RRNS…SSHR. Phosphoserine is present on S599.

The protein belongs to the MAP65/ASE1 family. In terms of assembly, forms dimer. Binds to microtubules (MT).

Its subcellular location is the nucleus. It localises to the cytoplasm. The protein resides in the cytoskeleton. It is found in the spindle pole. The sequence is that of 65-kDa microtubule-associated protein 7 (MAP65-7) from Arabidopsis thaliana (Mouse-ear cress).